Reading from the N-terminus, the 128-residue chain is Sulfurtransferase TusD (128 aa).

The Cysteine persulfide intermediate role is filled by Cys78.

This sequence belongs to the DsrE/TusD family. In terms of assembly, heterohexamer, formed by a dimer of trimers. The hexameric TusBCD complex contains 2 copies each of TusB, TusC and TusD. The TusBCD complex interacts with TusE.

The protein localises to the cytoplasm. Its function is as follows. Part of a sulfur-relay system required for 2-thiolation of 5-methylaminomethyl-2-thiouridine (mnm(5)s(2)U) at tRNA wobble positions. Accepts sulfur from TusA and transfers it in turn to TusE. The polypeptide is Sulfurtransferase TusD (Escherichia coli O45:K1 (strain S88 / ExPEC)).